Reading from the N-terminus, the 327-residue chain is Methionyl-tRNA formyltransferase (327 aa).

122–125 (SLLP) is a (6S)-5,6,7,8-tetrahydrofolate binding site.

This sequence belongs to the Fmt family.

It catalyses the reaction L-methionyl-tRNA(fMet) + (6R)-10-formyltetrahydrofolate = N-formyl-L-methionyl-tRNA(fMet) + (6S)-5,6,7,8-tetrahydrofolate + H(+). In terms of biological role, attaches a formyl group to the free amino group of methionyl-tRNA(fMet). The formyl group appears to play a dual role in the initiator identity of N-formylmethionyl-tRNA by promoting its recognition by IF2 and preventing the misappropriation of this tRNA by the elongation apparatus. The polypeptide is Methionyl-tRNA formyltransferase (Ralstonia pickettii (strain 12J)).